We begin with the raw amino-acid sequence, 154 residues long: UPF0178 protein YaiI (154 aa).

This sequence belongs to the UPF0178 family.

In Escherichia fergusonii (strain ATCC 35469 / DSM 13698 / CCUG 18766 / IAM 14443 / JCM 21226 / LMG 7866 / NBRC 102419 / NCTC 12128 / CDC 0568-73), this protein is UPF0178 protein YaiI.